The chain runs to 205 residues: Cytochrome c oxidase subunit 3 (205 aa).

5 helical membrane passes run 29–49 (TIVF…MYFV), 73–93 (LAIT…VFAA), 104–124 (WFLI…YEYF), 144–164 (ITTG…VVVL), and 184–204 (SYYW…IYFI).

It belongs to the cytochrome c oxidase subunit 3 family. In terms of assembly, associates with subunits I, II and IV to form cytochrome c oxidase.

Its subcellular location is the cell membrane. It carries out the reaction 4 Fe(II)-[cytochrome c] + O2 + 8 H(+)(in) = 4 Fe(III)-[cytochrome c] + 2 H2O + 4 H(+)(out). This Corynebacterium efficiens (strain DSM 44549 / YS-314 / AJ 12310 / JCM 11189 / NBRC 100395) protein is Cytochrome c oxidase subunit 3 (ctaE).